Reading from the N-terminus, the 431-residue chain is Histidinol dehydrogenase (431 aa).

NAD(+) is bound by residues Tyr-124, Gln-187, and Asn-210. The substrate site is built by Ser-236, Gln-258, and His-261. 2 residues coordinate Zn(2+): Gln-258 and His-261. Residues Glu-325 and His-326 each act as proton acceptor in the active site. 4 residues coordinate substrate: His-326, Asp-359, Glu-413, and His-418. Asp-359 serves as a coordination point for Zn(2+). His-418 is a binding site for Zn(2+).

This sequence belongs to the histidinol dehydrogenase family. It depends on Zn(2+) as a cofactor.

The enzyme catalyses L-histidinol + 2 NAD(+) + H2O = L-histidine + 2 NADH + 3 H(+). The protein operates within amino-acid biosynthesis; L-histidine biosynthesis; L-histidine from 5-phospho-alpha-D-ribose 1-diphosphate: step 9/9. Functionally, catalyzes the sequential NAD-dependent oxidations of L-histidinol to L-histidinaldehyde and then to L-histidine. This Legionella pneumophila subsp. pneumophila (strain Philadelphia 1 / ATCC 33152 / DSM 7513) protein is Histidinol dehydrogenase.